Here is a 299-residue protein sequence, read N- to C-terminus: MGISMKDIKELRSRTGAGVLDCKKALAETNGDIDAAVEYLREKGIAAAAKKAGRVAAEGAVNVYISDDRKKGVIVEVNSETDFVAKNDNFKDLVNKISEHLMQSDANSVDEVLKETWYQDSEKDVNTIIKEAIASIGENINLRRFEKYETNGFLQGYIHMGGKIGVLVDIDGEFNDSTRKVAKDIAMHIAAINPRYLSRDDISEEVINKEKEIYKEQMLNEGKPEHIIGQIVKGKMEKYYSEVCLLDQAFVRDEDITVGKLIEDNGLKINGFTRFELGEGIEKEEEDFAAEVMKEVNKK.

An involved in Mg(2+) ion dislocation from EF-Tu region spans residues Thr81 to Val84.

It belongs to the EF-Ts family.

It localises to the cytoplasm. In terms of biological role, associates with the EF-Tu.GDP complex and induces the exchange of GDP to GTP. It remains bound to the aminoacyl-tRNA.EF-Tu.GTP complex up to the GTP hydrolysis stage on the ribosome. This Halothermothrix orenii (strain H 168 / OCM 544 / DSM 9562) protein is Elongation factor Ts.